A 181-amino-acid polypeptide reads, in one-letter code: MTEEHVVLLDEQDKPSGTLEKYAAHTLNTPLHLAFSCWLFNEDGQLLVTRRSLSKKAWPGVWTNSVCGHPQQGETTEEAIIRRCRFELGVEITDLTPVYPHFSYRATDPNGIVENEVCPVFAARATSVLQVNSEEVMDYQWSEFKSVWKSLLATPWAFSPWMVMQASDEQARERLLNYCQR.

Mn(2+)-binding residues include histidine 25 and histidine 32. The Nudix hydrolase domain occupies 30–164 (PLHLAFSCWL…PWAFSPWMVM (135 aa)). Cysteine 67 is an active-site residue. Cysteine 67 contacts Mg(2+). Histidine 69 lines the Mn(2+) pocket. Mg(2+) is bound at residue glutamate 87. Positions 114 and 116 each coordinate Mn(2+). Residue glutamate 116 is part of the active site.

The protein belongs to the IPP isomerase type 1 family. As to quaternary structure, homodimer. Mg(2+) serves as cofactor. Requires Mn(2+) as cofactor.

It is found in the cytoplasm. It carries out the reaction isopentenyl diphosphate = dimethylallyl diphosphate. It participates in isoprenoid biosynthesis; dimethylallyl diphosphate biosynthesis; dimethylallyl diphosphate from isopentenyl diphosphate: step 1/1. Functionally, catalyzes the 1,3-allylic rearrangement of the homoallylic substrate isopentenyl (IPP) to its highly electrophilic allylic isomer, dimethylallyl diphosphate (DMAPP). The sequence is that of Isopentenyl-diphosphate Delta-isomerase from Salmonella choleraesuis (strain SC-B67).